We begin with the raw amino-acid sequence, 114 residues long: MTIRLLCYVGFYFLGAGLMEADIYQTPRYLVIGTGKKITLECSQTMGHDKMYWYQQDPGMELHLIHYSYGVNSTEKGDLSSESTVSRIRTEHFPLTLESARPSHTSQYLCASSE.

An N-terminal signal peptide occupies residues 1-21; that stretch reads MTIRLLCYVGFYFLGAGLMEA. The Ig-like domain occupies 22–114; that stretch reads DIYQTPRYLV…TSQYLCASSE (93 aa). An intrachain disulfide couples Cys-42 to Cys-110. The N-linked (GlcNAc...) asparagine glycan is linked to Asn-72.

As to quaternary structure, alpha-beta TR is a heterodimer composed of an alpha and beta chain; disulfide-linked. The alpha-beta TR is associated with the transmembrane signaling CD3 coreceptor proteins to form the TR-CD3 (TcR or TCR). The assembly of alpha-beta TR heterodimers with CD3 occurs in the endoplasmic reticulum where a single alpha-beta TR heterodimer associates with one CD3D-CD3E heterodimer, one CD3G-CD3E heterodimer and one CD247 homodimer forming a stable octameric structure. CD3D-CD3E and CD3G-CD3E heterodimers preferentially associate with TR alpha and TR beta chains, respectively. The association of the CD247 homodimer is the last step of TcR assembly in the endoplasmic reticulum and is required for transport to the cell surface.

The protein localises to the cell membrane. In terms of biological role, v region of the variable domain of T cell receptor (TR) beta chain that participates in the antigen recognition. Alpha-beta T cell receptors are antigen specific receptors which are essential to the immune response and are present on the cell surface of T lymphocytes. Recognize peptide-major histocompatibility (MH) (pMH) complexes that are displayed by antigen presenting cells (APC), a prerequisite for efficient T cell adaptive immunity against pathogens. Binding of alpha-beta TR to pMH complex initiates TR-CD3 clustering on the cell surface and intracellular activation of LCK that phosphorylates the ITAM motifs of CD3G, CD3D, CD3E and CD247 enabling the recruitment of ZAP70. In turn ZAP70 phosphorylates LAT, which recruits numerous signaling molecules to form the LAT signalosome. The LAT signalosome propagates signal branching to three major signaling pathways, the calcium, the mitogen-activated protein kinase (MAPK) kinase and the nuclear factor NF-kappa-B (NF-kB) pathways, leading to the mobilization of transcription factors that are critical for gene expression and essential for T cell growth and differentiation. The T cell repertoire is generated in the thymus, by V-(D)-J rearrangement. This repertoire is then shaped by intrathymic selection events to generate a peripheral T cell pool of self-MH restricted, non-autoaggressive T cells. Post-thymic interaction of alpha-beta TR with the pMH complexes shapes TR structural and functional avidity. This is T cell receptor beta variable 25-1 from Homo sapiens (Human).